The sequence spans 405 residues: N-methyltransferase nanE (405 aa).

Residues 238-239 (GG), Asp261, and 290-291 (HH) contribute to the S-adenosyl-L-methionine site.

The protein belongs to the class I-like SAM-binding methyltransferase superfamily. Cation-independent O-methyltransferase family.

It functions in the pathway secondary metabolite biosynthesis. Its function is as follows. N-methyltransferase; part of the gene cluster that mediates the biosynthesis of the benzazepine alkaloid nanangelenin A which contains an unprecedented 3,4-dihydro-1-benzazepine-2,5-dione-N-prenyl-N-acetoxy-anthranilamide scaffold. The first step of nanangelenin biosynthesis is catalyzed by the indoleamine 2,3-dioxygenase nanC which produces N-formyl-kynurenine through the catabolism of tryptophan. The two-module NRPS nanA then utilizes anthranilate (Ant) and L-kynurenine (L-Kyn) to assemble the dipeptide product nanangelenin B. The first adenylation domain of nanA (A1) loads anthranilate onto the T1 domain, while A2 loads kynurenine, generated through spontaneous nonenzymatic deformylation of the nanC-supplied N-formyl-kynurenine. The peptide bond formation between the tethered amino acids is catalyzed by the first condensation domain (C1) between anthranilate's carbonyl carbon and kynurenine's aliphatic primary amine. The second C domain (C2) catalyzes the final cyclization event between the aromatic amine of kynurenine and the tethered carbonyl carbon, yielding nanangelenin B. The terminal T3 domain enhances the catalytic efficiency of C2, suggesting the T2-tethered Ant-L-Kyn is transferred to T3 prior to cyclization by C2. Once released from nanA, nanangelenin B is then prenylated by the prenyltransferase nanD to form nanangelenin C. Nanangelenin C is then N-hydroxylated by the FAD-dependent monooxygenase nanF and further acetylated by the acetyltransferase nanB to yield nanangelenin F. Finally, the N-methyltransferase nanE methylates the amide nitrogen of 1-benzazepine to convert nanangelenin F into nanangelenin A. NanE is also able to methylate most of the intermediates of the pathway such as nanangelenin B and nanangelenin C to produce nanangelenin D and nanangelenin E, respectively. The chain is N-methyltransferase nanE from Aspergillus nanangensis.